A 232-amino-acid chain; its full sequence is Ion-translocating oxidoreductase complex subunit E (232 aa).

5 consecutive transmembrane segments (helical) span residues 39–59, 69–89, 93–113, 128–148, and 182–202; these read LGLG…ISLV, IPVF…LVNA, GLYM…IIIG, AFDG…LGAT, and SFLL…LIAL.

Belongs to the NqrDE/RnfAE family. In terms of assembly, the complex is composed of six subunits: RnfA, RnfB, RnfC, RnfD, RnfE and RnfG.

The protein resides in the cell inner membrane. Its function is as follows. Part of a membrane-bound complex that couples electron transfer with translocation of ions across the membrane. This Shewanella oneidensis (strain ATCC 700550 / JCM 31522 / CIP 106686 / LMG 19005 / NCIMB 14063 / MR-1) protein is Ion-translocating oxidoreductase complex subunit E.